The chain runs to 366 residues: Probable UDP-arabinopyranose mutase 2 (366 aa).

Positions 104–106 (DDD) match the DXD motif motif. N-linked (Glc...) arginine glycosylation occurs at Arg152.

The protein belongs to the RGP family. In terms of assembly, homopentamer or homohexamer. Mn(2+) is required as a cofactor. It depends on Mg(2+) as a cofactor. Reversibly glycosylated by UDP-glucose, UDP-xylose and UDP-galactose, but not UDP-mannose. In terms of tissue distribution, expressed in all tissues tested, including root, tuber, leaf, petiole, shoot, stolon and stem.

It is found in the secreted. Its subcellular location is the cell wall. The protein localises to the cell junction. The protein resides in the plasmodesma. It localises to the golgi apparatus. The catalysed reaction is UDP-beta-L-arabinofuranose = UDP-beta-L-arabinopyranose. In terms of biological role, probable UDP-L-arabinose mutase involved in the biosynthesis of cell wall non-cellulosic polysaccharides. Was initially shown to possess an autoglycosylating activity which is dependent on the presence of UDP-glucose and manganese. The protein is Probable UDP-arabinopyranose mutase 2 of Solanum tuberosum (Potato).